The chain runs to 245 residues: Ribonuclease PH (245 aa).

Phosphate contacts are provided by residues Arg-93 and 131–133; that span reads GTR.

This sequence belongs to the RNase PH family. Homohexameric ring arranged as a trimer of dimers.

The enzyme catalyses tRNA(n+1) + phosphate = tRNA(n) + a ribonucleoside 5'-diphosphate. Functionally, phosphorolytic 3'-5' exoribonuclease that plays an important role in tRNA 3'-end maturation. Removes nucleotide residues following the 3'-CCA terminus of tRNAs; can also add nucleotides to the ends of RNA molecules by using nucleoside diphosphates as substrates, but this may not be physiologically important. Probably plays a role in initiation of 16S rRNA degradation (leading to ribosome degradation) during starvation. This chain is Ribonuclease PH, found in Corynebacterium efficiens (strain DSM 44549 / YS-314 / AJ 12310 / JCM 11189 / NBRC 100395).